Here is an 83-residue protein sequence, read N- to C-terminus: Small ribosomal subunit protein bS16 (83 aa).

The protein belongs to the bacterial ribosomal protein bS16 family.

The polypeptide is Small ribosomal subunit protein bS16 (Pseudomonas fluorescens (strain SBW25)).